Here is a 75-residue protein sequence, read N- to C-terminus: Large ribosomal subunit protein bL31 (75 aa).

Residues cysteine 16, cysteine 18, cysteine 37, and cysteine 40 each coordinate Zn(2+).

It belongs to the bacterial ribosomal protein bL31 family. Type A subfamily. Part of the 50S ribosomal subunit. The cofactor is Zn(2+).

Functionally, binds the 23S rRNA. The polypeptide is Large ribosomal subunit protein bL31 (Nitrosospira multiformis (strain ATCC 25196 / NCIMB 11849 / C 71)).